Reading from the N-terminus, the 857-residue chain is MKGARNIYHHSYMSFLLVFVVMILIHPALSIYINTLSSTESLTISSNKTLVSPGSIFEVGFFRTNSRWYLGMWYKKVSDRTYVWVANRDNPLSNAIGTLKISGNNLVLLDHSNKPVWWTNLTRGNERSPVVAELLANGNFVMRDSSNNDASEYLWQSFDYPTDTLLPEMKLGYNLKTGLNRFLTSWRSSDDPSSGNFSYKLETQSLPEFYLSRENFPMHRSGPWNGIRFSGIPEDQKLSYMVYNFIENNEEVAYTFRMTNNSFYSRLTLISEGYFQRLTWYPSIRIWNRFWSSPVDPQCDTYIMCGPYAYCDVNTSPVCNCIQGFNPRNIQQWDQRVWAGGCIRRTQLSCSGDGFTRMKKMKLPETTMATVDRSIGVKECKKRCISDCNCTAFANADIRNGGSGCVIWTERLEDIRNYATDAIDGQDLYVRLAAADIAKKRNASGKIISLTVGVSVLLLLIMFCLWKRKQKRAKASAISIANTQRNQNLPMNEMVLSSKREFSGEYKFEELELPLIEMETVVKATENFSSCNKLGQGGFGIVYKGRLLDGKEIAVKRLSKTSVQGTDEFMNEVTLIARLQHINLVQVLGCCIEGDEKMLIYEYLENLSLDSYLFGKTRRSKLNWNERFDITNGVARGLLYLHQDSRFRIIHRDLKVSNILLDKNMIPKISDFGMARIFERDETEANTMKVVGTYGYMSPEYAMYGIFSEKSDVFSFGVIVLEIVSGKKNRGFYNLDYENDLLSYVWSRWKEGRALEIVDPVIVDSLSSQPSIFQPQEVLKCIQIGLLCVQELAEHRPAMSSVVWMFGSEATEIPQPKPPGYCVRRSPYELDPSSSWQCDENESWTVNQYTCSVIDAR.

Positions 1 to 32 (MKGARNIYHHSYMSFLLVFVVMILIHPALSIY) are cleaved as a signal peptide. At 33–446 (INTLSSTESL…IAKKRNASGK (414 aa)) the chain is on the extracellular side. One can recognise a Bulb-type lectin domain in the interval 35–155 (TLSSTESLTI…SNNDASEYLW (121 aa)). Residues Asn-47, Asn-120, Asn-196, Asn-260, Asn-389, and Asn-442 are each glycosylated (N-linked (GlcNAc...) asparagine). The region spanning 350–433 (CSGDGFTRMK…DGQDLYVRLA (84 aa)) is the PAN domain. Intrachain disulfides connect Cys-380-Cys-405 and Cys-388-Cys-390. The chain crosses the membrane as a helical span at residues 447–466 (IISLTVGVSVLLLLIMFCLW). Residues 467–857 (KRKQKRAKAS…QYTCSVIDAR (391 aa)) are Cytoplasmic-facing. Positions 528–779 (FSSCNKLGQG…PSIFQPQEVL (252 aa)) constitute a Protein kinase domain. Residues 534–542 (LGQGGFGIV) and Lys-556 each bind ATP. Residue Asp-653 is the Proton acceptor of the active site.

The protein belongs to the protein kinase superfamily. Ser/Thr protein kinase family. In terms of tissue distribution, predominantly in the pistil and anther.

It is found in the membrane. The enzyme catalyses L-seryl-[protein] + ATP = O-phospho-L-seryl-[protein] + ADP + H(+). It catalyses the reaction L-threonyl-[protein] + ATP = O-phospho-L-threonyl-[protein] + ADP + H(+). Functionally, involved in sporophytic self-incompatibility system (the inability of flowering plants to achieve self-fertilization), probably acting in combination with S-locus-specific glycoproteins. Interaction with a ligand in the extracellular domain triggers the protein kinase activity of the cytoplasmic domain. The sequence is that of Putative serine/threonine-protein kinase receptor (SRK6) from Brassica oleracea var. viridis (Flowering kale).